We begin with the raw amino-acid sequence, 184 residues long: Protein GrpE (184 aa).

Residues 1–10 (MSQETEKDLE) are compositionally biased toward basic and acidic residues. The interval 1-38 (MSQETEKDLEQTQNEELVEEAQSDEKKDQEVDPVEAAQ) is disordered.

The protein belongs to the GrpE family. In terms of assembly, homodimer.

The protein localises to the cytoplasm. In terms of biological role, participates actively in the response to hyperosmotic and heat shock by preventing the aggregation of stress-denatured proteins, in association with DnaK and GrpE. It is the nucleotide exchange factor for DnaK and may function as a thermosensor. Unfolded proteins bind initially to DnaJ; upon interaction with the DnaJ-bound protein, DnaK hydrolyzes its bound ATP, resulting in the formation of a stable complex. GrpE releases ADP from DnaK; ATP binding to DnaK triggers the release of the substrate protein, thus completing the reaction cycle. Several rounds of ATP-dependent interactions between DnaJ, DnaK and GrpE are required for fully efficient folding. The chain is Protein GrpE from Sulfurovum sp. (strain NBC37-1).